Reading from the N-terminus, the 89-residue chain is Small ribosomal subunit protein uS15 (89 aa).

Belongs to the universal ribosomal protein uS15 family. Part of the 30S ribosomal subunit. Forms a bridge to the 50S subunit in the 70S ribosome, contacting the 23S rRNA.

In terms of biological role, one of the primary rRNA binding proteins, it binds directly to 16S rRNA where it helps nucleate assembly of the platform of the 30S subunit by binding and bridging several RNA helices of the 16S rRNA. Forms an intersubunit bridge (bridge B4) with the 23S rRNA of the 50S subunit in the ribosome. This is Small ribosomal subunit protein uS15 from Lacticaseibacillus casei (strain BL23) (Lactobacillus casei).